The following is a 937-amino-acid chain: Glycine dehydrogenase (decarboxylating) (937 aa).

K686 is modified (N6-(pyridoxal phosphate)lysine).

The protein belongs to the GcvP family. The glycine cleavage system is composed of four proteins: P, T, L and H. The cofactor is pyridoxal 5'-phosphate.

The enzyme catalyses N(6)-[(R)-lipoyl]-L-lysyl-[glycine-cleavage complex H protein] + glycine + H(+) = N(6)-[(R)-S(8)-aminomethyldihydrolipoyl]-L-lysyl-[glycine-cleavage complex H protein] + CO2. Functionally, the glycine cleavage system catalyzes the degradation of glycine. The P protein binds the alpha-amino group of glycine through its pyridoxal phosphate cofactor; CO(2) is released and the remaining methylamine moiety is then transferred to the lipoamide cofactor of the H protein. This chain is Glycine dehydrogenase (decarboxylating), found in Mesorhizobium japonicum (strain LMG 29417 / CECT 9101 / MAFF 303099) (Mesorhizobium loti (strain MAFF 303099)).